Reading from the N-terminus, the 993-residue chain is UPF0182 protein ROP_64500 (993 aa).

The next 7 membrane-spanning stretches (helical) occupy residues 18-38 (VLLVLALVVAALLLVGPRLIS), 63-83 (LLLFLVVGVVVGGIVWLALLL), 114-134 (LFGLAIPIAVGLLAGLIAQSS), 174-194 (WLFVAVLLAFFASLVTHYIFG), 211-231 (VQLAVLAGTFILLKAVAYWFD), 260-280 (KLILLAIAVICAGAFFAAIFL), and 288-308 (MATALLVLSSILVGAVWPLVV). The disordered stretch occupies residues 904 to 948 (TGSVATAPSAEEGTPPETGTTPPVEQGAAPPAPTAPATPPSGTDV). Residues 908 to 926 (ATAPSAEEGTPPETGTTPP) show a composition bias toward low complexity. Over residues 933–942 (PPAPTAPATP) the composition is skewed to pro residues.

Belongs to the UPF0182 family.

The protein localises to the cell membrane. The sequence is that of UPF0182 protein ROP_64500 from Rhodococcus opacus (strain B4).